The primary structure comprises 261 residues: Imidazole glycerol phosphate synthase subunit HisF (261 aa).

Catalysis depends on residues aspartate 12 and aspartate 131.

The protein belongs to the HisA/HisF family. In terms of assembly, heterodimer of HisH and HisF.

The protein resides in the cytoplasm. The enzyme catalyses 5-[(5-phospho-1-deoxy-D-ribulos-1-ylimino)methylamino]-1-(5-phospho-beta-D-ribosyl)imidazole-4-carboxamide + L-glutamine = D-erythro-1-(imidazol-4-yl)glycerol 3-phosphate + 5-amino-1-(5-phospho-beta-D-ribosyl)imidazole-4-carboxamide + L-glutamate + H(+). It functions in the pathway amino-acid biosynthesis; L-histidine biosynthesis; L-histidine from 5-phospho-alpha-D-ribose 1-diphosphate: step 5/9. Its function is as follows. IGPS catalyzes the conversion of PRFAR and glutamine to IGP, AICAR and glutamate. The HisF subunit catalyzes the cyclization activity that produces IGP and AICAR from PRFAR using the ammonia provided by the HisH subunit. The chain is Imidazole glycerol phosphate synthase subunit HisF from Brucella abortus (strain S19).